Consider the following 607-residue polypeptide: DNA mismatch repair protein MutL (607 aa).

The protein belongs to the DNA mismatch repair MutL/HexB family.

Its function is as follows. This protein is involved in the repair of mismatches in DNA. It is required for dam-dependent methyl-directed DNA mismatch repair. May act as a 'molecular matchmaker', a protein that promotes the formation of a stable complex between two or more DNA-binding proteins in an ATP-dependent manner without itself being part of a final effector complex. In Paramagnetospirillum magneticum (strain ATCC 700264 / AMB-1) (Magnetospirillum magneticum), this protein is DNA mismatch repair protein MutL.